Consider the following 389-residue polypeptide: Large envelope protein (389 aa).

M1 carries the post-translational modification N-acetylmethionine. Residue G2 is the site of N-myristoyl glycine; by host attachment. Residues 2–108 (GQNLSTSNPL…PPLRDTHPQA (107 aa)) are pre-S1. The pre-S stretch occupies residues 2-163 (GQNLSTSNPL…FSTTGDPAPN (162 aa)). Topologically, residues 2 to 170 (GQNLSTSNPL…APNMENITSG (169 aa)) are virion surface; in external conformation. Topologically, residues 2–242 (GQNLSTSNPL…PGYRWMCLRR (241 aa)) are intravirion; in internal conformation. Positions 75-107 (TTLPANPPPASTNRQSGRQPTPLSPPLRDTHPQ) are disordered. Polar residues predominate over residues 85–95 (STNRQSGRQPT). The interval 109 to 163 (MQWNSTTFHQALQDPRVRGLYFPAGGSSSGTLNPVPNTASHISSVFSTTGDPAPN) is pre-S2. Residues 171 to 191 (FLGPLLVLQAGFFLLTKILTI) traverse the membrane as a helical segment. Topologically, residues 192-242 (PQSLDSWWTSLNFLGGAPVCLGQNSQSPTSNHSPTSCPPICPGYRWMCLRR) are intravirion; in external conformation. The chain crosses the membrane as a helical span at residues 243-263 (FIIFLFILLLCLIFLLVLLDY). Topologically, residues 264-337 (QGMLPVCPLI…WASVRFSWLS (74 aa)) are virion surface. Residue N309 is glycosylated (N-linked (GlcNAc...) asparagine; by host). The chain crosses the membrane as a helical span at residues 338-358 (LLAPFVQWFAGLSPTVWLLAI). The Intravirion portion of the chain corresponds to 359–364 (WMMWYW). The helical transmembrane segment at 365-387 (GPNLYNILSPFIPLLPIFFCLWV) threads the bilayer. Over 388-389 (YI) the chain is Virion surface.

Belongs to the orthohepadnavirus major surface antigen family. As to quaternary structure, in its internal form (Li-HBsAg), interacts with the capsid protein and with the isoform S. Interacts with host chaperone CANX. In terms of assembly, associates with host chaperone CANX through its pre-S2 N glycan; this association may be essential for isoform M proper secretion. Interacts with isoform L. Interacts with the antigens of satellite virus HDV (HDVAgs); this interaction is required for encapsidation of HDV genomic RNA. Post-translationally, isoform M is N-terminally acetylated by host at a ratio of 90%, and N-glycosylated by host at the pre-S2 region. Myristoylated.

The protein localises to the virion membrane. The large envelope protein exists in two topological conformations, one which is termed 'external' or Le-HBsAg and the other 'internal' or Li-HBsAg. In its external conformation the protein attaches the virus to cell receptors and thereby initiating infection. This interaction determines the species specificity and liver tropism. This attachment induces virion internalization predominantly through caveolin-mediated endocytosis. The large envelope protein also assures fusion between virion membrane and endosomal membrane. In its internal conformation the protein plays a role in virion morphogenesis and mediates the contact with the nucleocapsid like a matrix protein. In terms of biological role, the middle envelope protein plays an important role in the budding of the virion. It is involved in the induction of budding in a nucleocapsid independent way. In this process the majority of envelope proteins bud to form subviral lipoprotein particles of 22 nm of diameter that do not contain a nucleocapsid. This Pan troglodytes (Chimpanzee) protein is Large envelope protein.